The primary structure comprises 357 residues: Histidinol-phosphate aminotransferase (357 aa).

The residue at position 212 (Lys-212) is an N6-(pyridoxal phosphate)lysine.

It belongs to the class-II pyridoxal-phosphate-dependent aminotransferase family. Histidinol-phosphate aminotransferase subfamily. In terms of assembly, homodimer. The cofactor is pyridoxal 5'-phosphate.

The catalysed reaction is L-histidinol phosphate + 2-oxoglutarate = 3-(imidazol-4-yl)-2-oxopropyl phosphate + L-glutamate. It functions in the pathway amino-acid biosynthesis; L-histidine biosynthesis; L-histidine from 5-phospho-alpha-D-ribose 1-diphosphate: step 7/9. The protein is Histidinol-phosphate aminotransferase of Pectobacterium atrosepticum (strain SCRI 1043 / ATCC BAA-672) (Erwinia carotovora subsp. atroseptica).